The chain runs to 472 residues: 3-isopropylmalate dehydratase large subunit (472 aa).

The [4Fe-4S] cluster site is built by cysteine 346, cysteine 406, and cysteine 409.

Belongs to the aconitase/IPM isomerase family. LeuC type 1 subfamily. Heterodimer of LeuC and LeuD. The cofactor is [4Fe-4S] cluster.

It catalyses the reaction (2R,3S)-3-isopropylmalate = (2S)-2-isopropylmalate. The protein operates within amino-acid biosynthesis; L-leucine biosynthesis; L-leucine from 3-methyl-2-oxobutanoate: step 2/4. In terms of biological role, catalyzes the isomerization between 2-isopropylmalate and 3-isopropylmalate, via the formation of 2-isopropylmaleate. This is 3-isopropylmalate dehydratase large subunit from Thermus thermophilus (strain ATCC BAA-163 / DSM 7039 / HB27).